The chain runs to 354 residues: Polyribonucleotide 5'-hydroxyl-kinase PF0112 (354 aa).

36–43 (GDVDTGKT) contacts ATP.

It depends on a divalent metal cation as a cofactor.

The enzyme catalyses a 5'-end dephospho-2'-deoxyribonucleoside-DNA + ATP = a 5'-end 5'-phospho-2'-deoxyribonucleoside-DNA + ADP + H(+). The catalysed reaction is a 5'-end dephospho-ribonucleoside-RNA + ATP = a 5'-end 5'-phospho-ribonucleoside-RNA + ADP + H(+). Polynucleotide kinase that can phosphorylate the 5'-hydroxyl groups of both single-stranded RNA (ssRNA) and single-stranded DNA (ssDNA). Exhibits a strong preference for ssRNA. The protein is Polyribonucleotide 5'-hydroxyl-kinase PF0112 of Pyrococcus furiosus (strain ATCC 43587 / DSM 3638 / JCM 8422 / Vc1).